Consider the following 340-residue polypeptide: Ferredoxin--NADP reductase (340 aa).

FAD is bound by residues Asp33, Gln41, Tyr46, Ala86, Phe120, Asp286, and Thr327.

It belongs to the ferredoxin--NADP reductase type 2 family. In terms of assembly, homodimer. It depends on FAD as a cofactor.

It carries out the reaction 2 reduced [2Fe-2S]-[ferredoxin] + NADP(+) + H(+) = 2 oxidized [2Fe-2S]-[ferredoxin] + NADPH. This is Ferredoxin--NADP reductase from Rickettsia rickettsii (strain Sheila Smith).